A 47-amino-acid polypeptide reads, in one-letter code: Antimicrobial peptide LCI (47 aa).

It localises to the secreted. Its function is as follows. Has antibacterial activity against X.oryzae pv oryzae and R.solanacearum, but not E.coli or P.carotovorum subsp carotovorum. May bind DNA or mRNA. The chain is Antimicrobial peptide LCI from Bacillus subtilis.